The following is a 496-amino-acid chain: Iroquois-class homeodomain protein irx-4-A (496 aa).

Residues G141–N203 constitute a DNA-binding region (homeobox; TALE-type). Residues N203–D246 are disordered. Over residues D221 to D232 the composition is skewed to acidic residues.

It belongs to the TALE/IRO homeobox family. As to expression, expressed in the neural plate in overlapping patterns with other irx members, which all share an anterior border of expression. At stage 20, expressed in a subset of cells in the developing hindbrain with expression appearing above the otic vesicle by stage 26. Expression in retina cells begins at stage 28, continuing at later stages and is limited to a subset of retinal cells of the optic cup. Also expressed in the ventricle of the heart from stage 36 (late tailbud) onwards. Only expressed in the pronephros at tadpole stage.

Its subcellular location is the nucleus. Functionally, acts partially redundantly with other irx members in neural patterning. Required for formation of the posterior forebrain, midbrain, hindbrain, and to a lesser extent, spinal cord. Patterns the neuroectoderm in both the anterior/posterior and dorsal/ventral axes. Does not appear to play a role in pronephros kidney development. The polypeptide is Iroquois-class homeodomain protein irx-4-A (irx4-a) (Xenopus laevis (African clawed frog)).